Reading from the N-terminus, the 189-residue chain is NADH-quinone oxidoreductase subunit B (189 aa).

4 residues coordinate [4Fe-4S] cluster: cysteine 39, cysteine 40, cysteine 104, and cysteine 135.

This sequence belongs to the complex I 20 kDa subunit family. In terms of assembly, NDH-1 is composed of 14 different subunits. Subunits NuoB, C, D, E, F, and G constitute the peripheral sector of the complex. It depends on [4Fe-4S] cluster as a cofactor.

Its subcellular location is the cell inner membrane. It carries out the reaction a quinone + NADH + 5 H(+)(in) = a quinol + NAD(+) + 4 H(+)(out). NDH-1 shuttles electrons from NADH, via FMN and iron-sulfur (Fe-S) centers, to quinones in the respiratory chain. The immediate electron acceptor for the enzyme in this species is believed to be a menaquinone. Couples the redox reaction to proton translocation (for every two electrons transferred, four hydrogen ions are translocated across the cytoplasmic membrane), and thus conserves the redox energy in a proton gradient. The polypeptide is NADH-quinone oxidoreductase subunit B (Chlorobaculum tepidum (strain ATCC 49652 / DSM 12025 / NBRC 103806 / TLS) (Chlorobium tepidum)).